The following is a 211-amino-acid chain: Probable nicotinate-nucleotide adenylyltransferase (211 aa).

It belongs to the NadD family.

The catalysed reaction is nicotinate beta-D-ribonucleotide + ATP + H(+) = deamido-NAD(+) + diphosphate. It participates in cofactor biosynthesis; NAD(+) biosynthesis; deamido-NAD(+) from nicotinate D-ribonucleotide: step 1/1. Catalyzes the reversible adenylation of nicotinate mononucleotide (NaMN) to nicotinic acid adenine dinucleotide (NaAD). This chain is Probable nicotinate-nucleotide adenylyltransferase, found in Shewanella sediminis (strain HAW-EB3).